Consider the following 284-residue polypeptide: Probable tRNA-splicing endonuclease subunit sen34 (284 aa).

Residues Tyr206, His214, and Lys245 contribute to the active site.

It belongs to the tRNA-intron endonuclease family. Heterotetramer composed of sen2, sen15, sen34 and sen54. Interacts directly with sen15.

It carries out the reaction pretRNA = a 3'-half-tRNA molecule with a 5'-OH end + a 5'-half-tRNA molecule with a 2',3'-cyclic phosphate end + an intron with a 2',3'-cyclic phosphate and a 5'-hydroxyl terminus.. Functionally, constitutes one of the two catalytic subunit of the tRNA-splicing endonuclease complex, a complex responsible for identification and cleavage of the splice sites in pre-tRNA. It cleaves pre-tRNA at the 5'- and 3'-splice sites to release the intron. The products are an intron and two tRNA half-molecules bearing 2',3'-cyclic phosphate and 5'-OH termini. There are no conserved sequences at the splice sites, but the intron is invariably located at the same site in the gene, placing the splice sites an invariant distance from the constant structural features of the tRNA body. It probably carries the active site for 3'-splice site cleavage. The polypeptide is Probable tRNA-splicing endonuclease subunit sen34 (sen34) (Schizosaccharomyces pombe (strain 972 / ATCC 24843) (Fission yeast)).